The primary structure comprises 486 residues: Siroheme synthase (486 aa).

Residues 1–204 (MNYLPIFVDL…HQIEQAEALV (204 aa)) are precorrin-2 dehydrogenase /sirohydrochlorin ferrochelatase. NAD(+) is bound by residues 22-23 (HV) and 43-44 (EK). A Phosphoserine modification is found at Ser128. Residues 216-486 (GEVSLVGAGP…NKETHWKQAA (271 aa)) are uroporphyrinogen-III C-methyltransferase. Pro225 is an S-adenosyl-L-methionine binding site. Asp248 serves as the catalytic Proton acceptor. Lys270 (proton donor) is an active-site residue. S-adenosyl-L-methionine-binding positions include 301 to 303 (GGD), Val306, 331 to 332 (TA), Met383, and Gly412.

In the N-terminal section; belongs to the precorrin-2 dehydrogenase / sirohydrochlorin ferrochelatase family. This sequence in the C-terminal section; belongs to the precorrin methyltransferase family.

The enzyme catalyses uroporphyrinogen III + 2 S-adenosyl-L-methionine = precorrin-2 + 2 S-adenosyl-L-homocysteine + H(+). The catalysed reaction is precorrin-2 + NAD(+) = sirohydrochlorin + NADH + 2 H(+). It carries out the reaction siroheme + 2 H(+) = sirohydrochlorin + Fe(2+). Its pathway is cofactor biosynthesis; adenosylcobalamin biosynthesis; precorrin-2 from uroporphyrinogen III: step 1/1. It participates in cofactor biosynthesis; adenosylcobalamin biosynthesis; sirohydrochlorin from precorrin-2: step 1/1. The protein operates within porphyrin-containing compound metabolism; siroheme biosynthesis; precorrin-2 from uroporphyrinogen III: step 1/1. It functions in the pathway porphyrin-containing compound metabolism; siroheme biosynthesis; siroheme from sirohydrochlorin: step 1/1. Its pathway is porphyrin-containing compound metabolism; siroheme biosynthesis; sirohydrochlorin from precorrin-2: step 1/1. In terms of biological role, multifunctional enzyme that catalyzes the SAM-dependent methylations of uroporphyrinogen III at position C-2 and C-7 to form precorrin-2 via precorrin-1. Then it catalyzes the NAD-dependent ring dehydrogenation of precorrin-2 to yield sirohydrochlorin. Finally, it catalyzes the ferrochelation of sirohydrochlorin to yield siroheme. This is Siroheme synthase from Actinobacillus pleuropneumoniae serotype 7 (strain AP76).